The sequence spans 105 residues: Nucleoid-associated protein Dred_0043 (105 aa).

This sequence belongs to the YbaB/EbfC family. As to quaternary structure, homodimer.

The protein resides in the cytoplasm. It localises to the nucleoid. Binds to DNA and alters its conformation. May be involved in regulation of gene expression, nucleoid organization and DNA protection. The chain is Nucleoid-associated protein Dred_0043 from Desulforamulus reducens (strain ATCC BAA-1160 / DSM 100696 / MI-1) (Desulfotomaculum reducens).